A 639-amino-acid polypeptide reads, in one-letter code: Chaperone protein DnaK (639 aa).

Residue T195 is modified to Phosphothreonine; by autocatalysis. The span at 601–618 (NAAAGAAPAGEPAPGEPQ) shows a compositional bias: low complexity. The segment at 601 to 639 (NAAAGAAPAGEPAPGEPQAEQKKDDGVIDAEYVDVDEKK) is disordered. Residues 627-639 (VIDAEYVDVDEKK) show a composition bias toward acidic residues.

The protein belongs to the heat shock protein 70 family.

Acts as a chaperone. This is Chaperone protein DnaK from Acidobacterium capsulatum (strain ATCC 51196 / DSM 11244 / BCRC 80197 / JCM 7670 / NBRC 15755 / NCIMB 13165 / 161).